Here is a 201-residue protein sequence, read N- to C-terminus: Adenylyl-sulfate kinase (201 aa).

Position 35–42 (Gly-35–Ser-42) interacts with ATP. Catalysis depends on Ser-109, which acts as the Phosphoserine intermediate.

This sequence belongs to the APS kinase family.

It catalyses the reaction adenosine 5'-phosphosulfate + ATP = 3'-phosphoadenylyl sulfate + ADP + H(+). It participates in sulfur metabolism; hydrogen sulfide biosynthesis; sulfite from sulfate: step 2/3. Functionally, catalyzes the synthesis of activated sulfate. The sequence is that of Adenylyl-sulfate kinase from Citrobacter koseri (strain ATCC BAA-895 / CDC 4225-83 / SGSC4696).